The primary structure comprises 549 residues: Chaperonin GroEL (549 aa).

ATP is bound by residues 29 to 32 (TAGP), Lys-50, 86 to 90 (DGTTT), Gly-418, and Asp-499.

It belongs to the chaperonin (HSP60) family. In terms of assembly, forms a cylinder of 14 subunits composed of two heptameric rings stacked back-to-back. Interacts with the co-chaperonin GroES.

It is found in the cytoplasm. It catalyses the reaction ATP + H2O + a folded polypeptide = ADP + phosphate + an unfolded polypeptide.. Together with its co-chaperonin GroES, plays an essential role in assisting protein folding. The GroEL-GroES system forms a nano-cage that allows encapsulation of the non-native substrate proteins and provides a physical environment optimized to promote and accelerate protein folding. The chain is Chaperonin GroEL from Wolbachia pipientis wMel.